We begin with the raw amino-acid sequence, 90 residues long: UPF0297 protein OEOE_1166 (90 aa).

This sequence belongs to the UPF0297 family.

In Oenococcus oeni (strain ATCC BAA-331 / PSU-1), this protein is UPF0297 protein OEOE_1166.